We begin with the raw amino-acid sequence, 244 residues long: Phosphonates import ATP-binding protein PhnC (244 aa).

An ABC transporter domain is found at 6 to 244 (IECHNLETAY…LQAQFVVNSQ (239 aa)). ATP is bound at residue 41-48 (GLNGAGKS).

The protein belongs to the ABC transporter superfamily. Phosphonates importer (TC 3.A.1.9.1) family. In terms of assembly, the complex is composed of two ATP-binding proteins (PhnC), two transmembrane proteins (PhnE) and a solute-binding protein (PhnD).

Its subcellular location is the cell inner membrane. The enzyme catalyses phosphonate(out) + ATP + H2O = phosphonate(in) + ADP + phosphate + H(+). Functionally, part of the ABC transporter complex PhnCDE involved in phosphonates import. Responsible for energy coupling to the transport system. The polypeptide is Phosphonates import ATP-binding protein PhnC (Trichormus variabilis (strain ATCC 29413 / PCC 7937) (Anabaena variabilis)).